Reading from the N-terminus, the 280-residue chain is 3-methyl-2-oxobutanoate hydroxymethyltransferase (280 aa).

The Mg(2+) site is built by aspartate 49 and aspartate 88. 3-methyl-2-oxobutanoate-binding positions include 49–50, aspartate 88, and lysine 118; that span reads DS. Glutamate 120 is a Mg(2+) binding site. The active-site Proton acceptor is glutamate 186.

It belongs to the PanB family. As to quaternary structure, homodecamer; pentamer of dimers. The cofactor is Mg(2+).

The protein resides in the cytoplasm. The catalysed reaction is 3-methyl-2-oxobutanoate + (6R)-5,10-methylene-5,6,7,8-tetrahydrofolate + H2O = 2-dehydropantoate + (6S)-5,6,7,8-tetrahydrofolate. It participates in cofactor biosynthesis; (R)-pantothenate biosynthesis; (R)-pantoate from 3-methyl-2-oxobutanoate: step 1/2. Catalyzes the reversible reaction in which hydroxymethyl group from 5,10-methylenetetrahydrofolate is transferred onto alpha-ketoisovalerate to form ketopantoate. In Ruegeria sp. (strain TM1040) (Silicibacter sp.), this protein is 3-methyl-2-oxobutanoate hydroxymethyltransferase.